Reading from the N-terminus, the 172-residue chain is Galectin-related protein (172 aa).

A2 is modified (N-acetylalanine). Residues S22 and S25 each carry the phosphoserine modification. One can recognise a Galectin domain in the interval 39–168 (PFCGHIKGGM…TIKINGDLQI (130 aa)).

As to quaternary structure, monomer.

Does not bind lactose, and may not bind carbohydrates. The sequence is that of Galectin-related protein (LGALSL) from Homo sapiens (Human).